The primary structure comprises 144 residues: Large ribosomal subunit protein uL15 (144 aa).

The tract at residues Met1–Glu51 is disordered. Residues Arg21 to Gly31 show a composition bias toward gly residues. Residues Gly32–Arg47 show a composition bias toward basic residues.

The protein belongs to the universal ribosomal protein uL15 family. In terms of assembly, part of the 50S ribosomal subunit.

Functionally, binds to the 23S rRNA. This chain is Large ribosomal subunit protein uL15, found in Actinobacillus succinogenes (strain ATCC 55618 / DSM 22257 / CCUG 43843 / 130Z).